The following is a 209-amino-acid chain: Uracil phosphoribosyltransferase (209 aa).

5-phospho-alpha-D-ribose 1-diphosphate contacts are provided by residues R79, R104, and D131 to S139. Uracil-binding positions include I194 and G199 to A201. D200 provides a ligand contact to 5-phospho-alpha-D-ribose 1-diphosphate.

This sequence belongs to the UPRTase family. Requires Mg(2+) as cofactor.

The catalysed reaction is UMP + diphosphate = 5-phospho-alpha-D-ribose 1-diphosphate + uracil. The protein operates within pyrimidine metabolism; UMP biosynthesis via salvage pathway; UMP from uracil: step 1/1. Allosterically activated by GTP. Functionally, catalyzes the conversion of uracil and 5-phospho-alpha-D-ribose 1-diphosphate (PRPP) to UMP and diphosphate. The polypeptide is Uracil phosphoribosyltransferase (Caulobacter vibrioides (strain ATCC 19089 / CIP 103742 / CB 15) (Caulobacter crescentus)).